A 394-amino-acid chain; its full sequence is NAD(P)H-quinone oxidoreductase subunit H (394 aa).

Belongs to the complex I 49 kDa subunit family. As to quaternary structure, NDH-1 can be composed of about 15 different subunits; different subcomplexes with different compositions have been identified which probably have different functions.

Its subcellular location is the cellular thylakoid membrane. It carries out the reaction a plastoquinone + NADH + (n+1) H(+)(in) = a plastoquinol + NAD(+) + n H(+)(out). The enzyme catalyses a plastoquinone + NADPH + (n+1) H(+)(in) = a plastoquinol + NADP(+) + n H(+)(out). Functionally, NDH-1 shuttles electrons from an unknown electron donor, via FMN and iron-sulfur (Fe-S) centers, to quinones in the respiratory and/or the photosynthetic chain. The immediate electron acceptor for the enzyme in this species is believed to be plastoquinone. Couples the redox reaction to proton translocation, and thus conserves the redox energy in a proton gradient. Cyanobacterial NDH-1 also plays a role in inorganic carbon-concentration. The polypeptide is NAD(P)H-quinone oxidoreductase subunit H (Synechococcus sp. (strain WH7803)).